The sequence spans 346 residues: Phosphate acyltransferase (346 aa).

This sequence belongs to the PlsX family. In terms of assembly, homodimer. Probably interacts with PlsY.

Its subcellular location is the cytoplasm. It carries out the reaction a fatty acyl-[ACP] + phosphate = an acyl phosphate + holo-[ACP]. The protein operates within lipid metabolism; phospholipid metabolism. Functionally, catalyzes the reversible formation of acyl-phosphate (acyl-PO(4)) from acyl-[acyl-carrier-protein] (acyl-ACP). This enzyme utilizes acyl-ACP as fatty acyl donor, but not acyl-CoA. In Deinococcus geothermalis (strain DSM 11300 / CIP 105573 / AG-3a), this protein is Phosphate acyltransferase.